Reading from the N-terminus, the 297-residue chain is Release factor glutamine methyltransferase (297 aa).

S-adenosyl-L-methionine is bound by residues G134–G138, D157, and N200. Position 200–203 (N200–Y203) interacts with substrate.

It belongs to the protein N5-glutamine methyltransferase family. PrmC subfamily.

The enzyme catalyses L-glutaminyl-[peptide chain release factor] + S-adenosyl-L-methionine = N(5)-methyl-L-glutaminyl-[peptide chain release factor] + S-adenosyl-L-homocysteine + H(+). Its function is as follows. Methylates the class 1 translation termination release factors RF1/PrfA and RF2/PrfB on the glutamine residue of the universally conserved GGQ motif. The polypeptide is Release factor glutamine methyltransferase (Bradyrhizobium diazoefficiens (strain JCM 10833 / BCRC 13528 / IAM 13628 / NBRC 14792 / USDA 110)).